Reading from the N-terminus, the 224-residue chain is GrpE protein homolog 2, mitochondrial (224 aa).

Residues 1-31 (MAARLLWAVRRRMQPLAAHAASEGRGWLHPF) constitute a mitochondrion transit peptide. At K141 the chain carries N6-acetyllysine.

This sequence belongs to the GrpE family. In terms of assembly, probable component of the PAM complex at least composed of a mitochondrial HSP70 protein, GRPEL1 or GRPEL2, TIMM44, TIMM16/PAM16 and TIMM14/DNAJC19.

The protein resides in the mitochondrion matrix. Functionally, essential component of the PAM complex, a complex required for the translocation of transit peptide-containing proteins from the inner membrane into the mitochondrial matrix in an ATP-dependent manner. Seems to control the nucleotide-dependent binding of mitochondrial HSP70 to substrate proteins. Stimulates ATPase activity of mt-HSP70. May also serve to modulate the interconversion of oligomeric (inactive) and monomeric (active) forms of mt-HSP70. The sequence is that of GrpE protein homolog 2, mitochondrial (GRPEL2) from Bos taurus (Bovine).